Reading from the N-terminus, the 2238-residue chain is MTPEAKRKKNQKKKLRQKQKKAAEKATDLPATDQSVNISGAEDALTSNSNVSTPDYTSNFEISVTSTQEVNVDSQLSQNQNSDNFINEQKENDPQSETVFDSHEDIESEMKDNYHNDIKNTTEAITFDTAQNIIGGSIDSSNTVKSEDKINESSSKISDPDCQEDILKLELEGQPLESSCNDDKESVVEGNNENDNNDDLVNDHPTAEDGSDFFDNLASNNTEVELSSTQNSNLLTENRLESEEFGKPEKLDYPKELSYSEEVDLVEEVDHVEEVDHVEEVDHSEEEDLVEEVDHVEEVDHSEEVDHSEEVDHVEEVDHSEELLTSSVSTQTGMAENTIRHVDESNLGQQKMEERNINSDTHKDATARVSDFHANDEFETGPAAQINSLIEMNDDEQSVNDLQDESSLLQEETTFSQIPKNEVNTENQENIGSESVSKINVANENSMESAIEDLFPSMHNTNEQNPWELPQQGENVVENEVSHEENQRITETTKDDSDNIDRILCDREDKKEDSFDDLFGNNEVGDDVPWLQESMKSEEGEKHHQSSTAKEESPANVRTSDNTASQDNDTLPSESVKSNQQQNVESSSDRQQTSADTVKKFSFLEEDDDLLDDDDSFLESEEEIEELESNETVQINELTQEMSTSAESKKLNHNPYRPSSHSSINTQMDPKYNNYQTVPNSSTAPTGIVRPQQITTFLPTNNAQTNTPGTILSPIQTTNEKVKKLTEEKKKSDAYDFPINLVSSTVKKGHAKPVGVFTNQFSRNGSTPTTPKINPHSRNSSVNPAQIIPKNPYASIQQPNPVIAPTTNMINNPINMMPTARMRGNSAVSTTSGKSVGTSVATKQNPYSPQITKSPRASISQPAGIPNNSKYGPISPSTSQFNSLGQVLDSGLVHSSTTPMGSTLSPISTKLNANNQPSPQSKQYPGNSSYLPSQNDSRSKYAPAFSTGQYAGYSSHSKPAVNQPALPFPRKQSESAGDANPPINTVLPPGIRKTNVLLESQQNLRQNANYPTYAEHSHEQTNSYNVHGASNKKIVNNNALLVKQFPIFNWGSNNKVIYGIPLGQNDSVMMPTNSPLQNLRMIGAEILIKPTQLIKSFPGPLCGSKVKKSDVEQWLLTASKDADVDEEAALLLSLLKLKLSTTSTFKDMATLLYDTATLHEYLAQPLTSLNQAPNAFSLDPESQFRVLSFLQVGAHDDALRFSLEKKDYSISLLIGSLLGKDKWCEVVQRYLSEQFTAIANNSNLWAHLLPLIFQVFVGSSKTAVSRFYKNQEEANWAAENWRGIVAAVLINITDHSQPKQTASIQTPPAVVTEFLIEFGIFLKKLGMNLPASILFVIANVPLSNVPILPDSDVHFRSIGSTNNVLGAILSETYEYTISQDLKFKGYPATLPLKLFHAYCLQEEGLTSLAYKYVDYLSSATKSMTKKDAESLNLSHHLSILTNRLAGSSSSWLGKPKLSSVWGQIDKSFNKYIGGDDDLPKPATEKKVFDSYTPSSSTNSSMIDLSHSVSNFMPAQINQLSRNNLNSENKMSTVPDLTAFGEKNAFEPPTNTWTGMSLQGSPQRAVSNMKPPLSNRPNLRRIKTELPSGEDELLSMTVKQGKKSYAPDNLNRASNSSNETLKSSQSANNSVPYHQSTPNLIGMQSVEQKKSYYPSNQRAMRKSAMPTQPENLEISRNARSYEPHTKTKKVYKPNQTLEEEPPIQSYNDDVVSQNQFEEAPNLQNDQEKILQPTASPEGLSQTRISNYSPERPPLPVYSEDSKNMDPKNISDLVKEQQITDKSLEHELEQLPTENDADYKISNANEDNAINEEEREIGNGEVELNVDQSQSHLSASIPQTQNDRESTTVSISPGLGLEMDVDKEDSNAPAPKLFSEKPNPSPYAPPTVGKKGTKKTSYMPKGKTESFIAEPEISSYESSPLDMYAYSGYRPQEKEKSTSSIVEESSQISNEDAPDKSSIAARQAVELKQDEVSKKPITTKLSTPKSLPIPPSPFANPLANNNTTGVLPTENFEPVIKVSRNTTARAFTPVPPASDQYDDVVEEDSDDSDDSEDDSPMQSNNSNNGNSERNENKQNDNYSDDEMPTKKKSHDNNDAGSGWFGWLKKDTNEKKAVKAKLGNQNSFYYDEQLKRWVNKNASEEDKQQLATPAPPPPIVKRKDTEPKTKPRSISGVTPHLDTGIGSSIPPISGNAPPKPKSGPSLAAKTNGLDDLLNLTAAAPATSTRRKKKGGRGYVNVMENL.

Positions 1–20 (MTPEAKRKKNQKKKLRQKQK) are enriched in basic residues. Disordered stretches follow at residues 1–115 (MTPE…DNYH), 135–161 (GGSI…SDPD), 173–255 (GQPL…DYPK), 297–363 (EEVD…DTHK), 394–596 (DDEQ…TSAD), 642–666 (MSTS…SINT), 757–787 (FTNQ…PAQI), 824–878 (GNSA…SPST), 892–988 (LVHS…TVLP), 1547–1577 (PPTN…NRPN), 1600–1703 (GKKS…PPIQ), 1732–1766 (TASP…MDPK), 1809–1901 (NEEE…PKGK), 1928–2102 (RPQE…GWLK), and 2133–2238 (KNAS…MENL). Polar residues predominate over residues 45–87 (LTSNSNVSTPDYTSNFEISVTSTQEVNVDSQLSQNQNSDNFIN). The span at 100-115 (FDSHEDIESEMKDNYH) shows a compositional bias: basic and acidic residues. 2 stretches are compositionally biased toward polar residues: residues 135-144 (GGSIDSSNTV) and 217-236 (LASN…NLLT). 2 stretches are compositionally biased toward basic and acidic residues: residues 238 to 255 (NRLE…DYPK) and 297 to 322 (EEVD…HSEE). Polar residues predominate over residues 325-335 (TSSVSTQTGMA). Over residues 351-363 (KMEERNINSDTHK) the composition is skewed to basic and acidic residues. The span at 394–404 (DDEQSVNDLQD) shows a compositional bias: acidic residues. Over residues 405-448 (ESSLLQEETTFSQIPKNEVNTENQENIGSESVSKINVANENSME) the composition is skewed to polar residues. Basic and acidic residues-rich tracts occupy residues 480–513 (EVSH…KKED) and 535–553 (MKSE…KEES). 3 stretches are compositionally biased toward polar residues: residues 556 to 596 (NVRT…TSAD), 657 to 666 (RPSSHSSINT), and 757 to 784 (FTNQ…SVNP). A compositionally biased stretch (low complexity) spans 824-842 (GNSAVSTTSGKSVGTSVAT). 8 stretches are compositionally biased toward polar residues: residues 843-878 (KQNP…SPST), 893-936 (VHSS…SQND), 946-957 (STGQYAGYSSHS), 1548-1565 (PTNT…QRAV), 1610-1638 (NRAS…STPN), 1732-1747 (TASP…SNYS), 1824-1849 (VDQS…TVSI), and 1936-1948 (TSSI…QISN). The span at 1963-1972 (VELKQDEVSK) shows a compositional bias: basic and acidic residues. Residues 2034–2053 (QYDDVVEEDSDDSDDSEDDS) show a composition bias toward acidic residues.

The protein belongs to the SEC16 family.

The protein localises to the endoplasmic reticulum membrane. In terms of biological role, involved in the initiation of assembly of the COPII coat required for the formation of transport vesicles from the endoplasmic reticulum (ER) and the selection of cargo molecules. Also involved in autophagy. This is COPII coat assembly protein SEC16 (SEC16) from Candida glabrata (strain ATCC 2001 / BCRC 20586 / JCM 3761 / NBRC 0622 / NRRL Y-65 / CBS 138) (Yeast).